Here is a 264-residue protein sequence, read N- to C-terminus: Type 1 encapsulin shell protein (264 aa).

Belongs to the encapsulin family. Family 1 subfamily. In terms of assembly, forms hollow shells composed of 60 subunits. Monomers probably form pentamers which assemble into the shell. There are 12 pores where the pentamers meet as well as 3-fold axis channels and dimer channels; none are larger than 3-4 Angstroms in diameter. The N-terminus of the protein is inside the shell, the C-terminus is outside.

It is found in the encapsulin nanocompartment. Its function is as follows. Shell component of a type 1 encapsulin nanocompartment. Assembles into proteinaceous shells 21-24 nm in diameter. Empty organelles can be expressed in E.coli. Cargo proteins (DypB) are targeted to the interior via their C-terminal extensions. The protein is Type 1 encapsulin shell protein of Rhodococcus erythropolis (strain PR4 / NBRC 100887).